The chain runs to 121 residues: Large ribosomal subunit protein uL18 (121 aa).

It belongs to the universal ribosomal protein uL18 family. Part of the 50S ribosomal subunit; part of the 5S rRNA/L5/L18/L25 subcomplex. Contacts the 5S and 23S rRNAs.

This is one of the proteins that bind and probably mediate the attachment of the 5S RNA into the large ribosomal subunit, where it forms part of the central protuberance. The sequence is that of Large ribosomal subunit protein uL18 from Streptococcus equi subsp. zooepidemicus (strain MGCS10565).